The following is a 217-amino-acid chain: Probable septum site-determining protein MinC (217 aa).

It belongs to the MinC family. Interacts with MinD and FtsZ.

Its function is as follows. Cell division inhibitor that blocks the formation of polar Z ring septums. Rapidly oscillates between the poles of the cell to destabilize FtsZ filaments that have formed before they mature into polar Z rings. Prevents FtsZ polymerization. The chain is Probable septum site-determining protein MinC from Pelotomaculum thermopropionicum (strain DSM 13744 / JCM 10971 / SI).